A 487-amino-acid polypeptide reads, in one-letter code: NAD-dependent histone deacetylase HST3 (487 aa).

In terms of domain architecture, Deacetylase sirtuin-type spans 15–336 (PADTSIKLHE…FLTQEQLDSE (322 aa)). NAD(+)-binding positions include 40–59 (GAGI…DGLY) and 129–132 (QNID). His-167 acts as the Proton acceptor in catalysis. 4 residues coordinate Zn(2+): Cys-175, Cys-178, Cys-200, and Cys-203. NAD(+) is bound by residues 261 to 263 (GTS), 291 to 293 (NKT), and Cys-312. A compositionally biased stretch (basic and acidic residues) spans 397-406 (VESVSVKEEP). A disordered region spans residues 397 to 487 (VESVSVKEEP…ARKGITLDQH (91 aa)). Residues 415-425 (HKPKQATKLKR) are compositionally biased toward basic residues. Polar residues predominate over residues 448 to 459 (DQLSSPASSING).

The protein belongs to the sirtuin family. Class I subfamily. Zn(2+) serves as cofactor.

The protein resides in the cytoplasm. It localises to the nucleus. The enzyme catalyses N(6)-acetyl-L-lysyl-[protein] + NAD(+) + H2O = 2''-O-acetyl-ADP-D-ribose + nicotinamide + L-lysyl-[protein]. Its function is as follows. NAD-dependent histone deacetylase, which could function in telomeric silencing, cell cycle progression and chromosome stability. In Candida albicans (strain SC5314 / ATCC MYA-2876) (Yeast), this protein is NAD-dependent histone deacetylase HST3 (HST3).